The primary structure comprises 339 residues: Ketol-acid reductoisomerase (NADP(+)) (339 aa).

Positions 1 to 182 constitute a KARI N-terminal Rossmann domain; the sequence is MRVYYDRDAD…GGGRAGIIET (182 aa). NADP(+) contacts are provided by residues 24 to 27, Arg48, Ser51, Thr53, and 83 to 86; these read YGSQ and DELQ. His108 is an active-site residue. Gly134 is an NADP(+) binding site. Positions 183-328 constitute a KARI C-terminal knotted domain; sequence TFKEECETDL…AKLRGMMPWI (146 aa). The Mg(2+) site is built by Asp191, Glu195, Glu227, and Glu231. Ser252 contacts substrate.

It belongs to the ketol-acid reductoisomerase family. It depends on Mg(2+) as a cofactor.

It carries out the reaction (2R)-2,3-dihydroxy-3-methylbutanoate + NADP(+) = (2S)-2-acetolactate + NADPH + H(+). It catalyses the reaction (2R,3R)-2,3-dihydroxy-3-methylpentanoate + NADP(+) = (S)-2-ethyl-2-hydroxy-3-oxobutanoate + NADPH + H(+). It functions in the pathway amino-acid biosynthesis; L-isoleucine biosynthesis; L-isoleucine from 2-oxobutanoate: step 2/4. Its pathway is amino-acid biosynthesis; L-valine biosynthesis; L-valine from pyruvate: step 2/4. Its function is as follows. Involved in the biosynthesis of branched-chain amino acids (BCAA). Catalyzes an alkyl-migration followed by a ketol-acid reduction of (S)-2-acetolactate (S2AL) to yield (R)-2,3-dihydroxy-isovalerate. In the isomerase reaction, S2AL is rearranged via a Mg-dependent methyl migration to produce 3-hydroxy-3-methyl-2-ketobutyrate (HMKB). In the reductase reaction, this 2-ketoacid undergoes a metal-dependent reduction by NADPH to yield (R)-2,3-dihydroxy-isovalerate. This Methylorubrum populi (strain ATCC BAA-705 / NCIMB 13946 / BJ001) (Methylobacterium populi) protein is Ketol-acid reductoisomerase (NADP(+)).